A 97-amino-acid chain; its full sequence is DNA-directed RNA polymerase subunit omega (97 aa).

The protein belongs to the RNA polymerase subunit omega family. As to quaternary structure, the RNAP catalytic core consists of 2 alpha, 1 beta, 1 beta' and 1 omega subunit. When a sigma factor is associated with the core the holoenzyme is formed, which can initiate transcription.

It catalyses the reaction RNA(n) + a ribonucleoside 5'-triphosphate = RNA(n+1) + diphosphate. Its function is as follows. Promotes RNA polymerase assembly. Latches the N- and C-terminal regions of the beta' subunit thereby facilitating its interaction with the beta and alpha subunits. The sequence is that of DNA-directed RNA polymerase subunit omega from Coxiella burnetii (strain Dugway 5J108-111).